Consider the following 445-residue polypeptide: Histidinol dehydrogenase (445 aa).

Residues Tyr144, Gln205, and Asn228 each contribute to the NAD(+) site. Residues Ser251, Gln273, and His276 each contribute to the substrate site. Zn(2+) is bound by residues Gln273 and His276. Active-site proton acceptor residues include Glu341 and His342. Substrate is bound by residues His342, Asp375, Glu429, and His434. Asp375 lines the Zn(2+) pocket. His434 is a binding site for Zn(2+).

This sequence belongs to the histidinol dehydrogenase family. Requires Zn(2+) as cofactor.

It catalyses the reaction L-histidinol + 2 NAD(+) + H2O = L-histidine + 2 NADH + 3 H(+). Its pathway is amino-acid biosynthesis; L-histidine biosynthesis; L-histidine from 5-phospho-alpha-D-ribose 1-diphosphate: step 9/9. Catalyzes the sequential NAD-dependent oxidations of L-histidinol to L-histidinaldehyde and then to L-histidine. In Cupriavidus pinatubonensis (strain JMP 134 / LMG 1197) (Cupriavidus necator (strain JMP 134)), this protein is Histidinol dehydrogenase.